The chain runs to 1588 residues: Pentafunctional AROM polypeptide (1588 aa).

A 3-dehydroquinate synthase region spans residues 1-392 (MVQLAKVPIL…YGDSAQFVSD (392 aa)). NAD(+)-binding positions include 43 to 45 (DTN), 78 to 81 (ETSK), 109 to 111 (GGV), and aspartate 114. Arginine 125 lines the 7-phospho-2-dehydro-3-deoxy-D-arabino-heptonate pocket. 134-135 (TS) lines the NAD(+) pocket. Aspartate 141 and lysine 147 together coordinate 7-phospho-2-dehydro-3-deoxy-D-arabino-heptonate. An NAD(+)-binding site is contributed by lysine 156. A 7-phospho-2-dehydro-3-deoxy-D-arabino-heptonate-binding site is contributed by asparagine 157. Residues 174–177 (WLET) and asparagine 185 each bind NAD(+). Glutamate 189 serves as a coordination point for Zn(2+). 7-phospho-2-dehydro-3-deoxy-D-arabino-heptonate-binding positions include 189–192 (EVIK) and lysine 258. Glutamate 268 serves as the catalytic Proton acceptor; for 3-dehydroquinate synthase activity. Residues 272-276 (RNLLN) and histidine 279 each bind 7-phospho-2-dehydro-3-deoxy-D-arabino-heptonate. A Zn(2+)-binding site is contributed by histidine 279. The Proton acceptor; for 3-dehydroquinate synthase activity role is filled by histidine 283. Residues histidine 295 and lysine 364 each contribute to the 7-phospho-2-dehydro-3-deoxy-D-arabino-heptonate site. Histidine 295 is a binding site for Zn(2+). Positions 405-871 (VYPFKDIPAD…WDVLHSELGA (467 aa)) are EPSP synthase. Cysteine 853 serves as the catalytic For EPSP synthase activity. Residues 890-1080 (SVVIIGMRAA…IPSGRSAFVC (191 aa)) form a shikimate kinase region. Position 895–902 (895–902 (GMRAAGKT)) interacts with ATP. The tract at residues 1081-1293 (LTFDDLTEQT…AAPGQLTVAQ (213 aa)) is 3-dehydroquinase. Catalysis depends on histidine 1198, which acts as the Proton acceptor; for 3-dehydroquinate dehydratase activity. The active-site Schiff-base intermediate with substrate; for 3-dehydroquinate dehydratase activity is lysine 1227. Positions 1306–1588 (PKELFVVGKP…KAIFDAVTKE (283 aa)) are shikimate dehydrogenase.

In the N-terminal section; belongs to the sugar phosphate cyclases superfamily. Dehydroquinate synthase family. It in the 2nd section; belongs to the EPSP synthase family. This sequence in the 3rd section; belongs to the shikimate kinase family. The protein in the 4th section; belongs to the type-I 3-dehydroquinase family. In the C-terminal section; belongs to the shikimate dehydrogenase family. In terms of assembly, homodimer. Requires Zn(2+) as cofactor.

It localises to the cytoplasm. The enzyme catalyses 7-phospho-2-dehydro-3-deoxy-D-arabino-heptonate = 3-dehydroquinate + phosphate. It carries out the reaction 3-dehydroquinate = 3-dehydroshikimate + H2O. It catalyses the reaction shikimate + NADP(+) = 3-dehydroshikimate + NADPH + H(+). The catalysed reaction is shikimate + ATP = 3-phosphoshikimate + ADP + H(+). The enzyme catalyses 3-phosphoshikimate + phosphoenolpyruvate = 5-O-(1-carboxyvinyl)-3-phosphoshikimate + phosphate. Its pathway is metabolic intermediate biosynthesis; chorismate biosynthesis; chorismate from D-erythrose 4-phosphate and phosphoenolpyruvate: step 2/7. It functions in the pathway metabolic intermediate biosynthesis; chorismate biosynthesis; chorismate from D-erythrose 4-phosphate and phosphoenolpyruvate: step 3/7. The protein operates within metabolic intermediate biosynthesis; chorismate biosynthesis; chorismate from D-erythrose 4-phosphate and phosphoenolpyruvate: step 4/7. It participates in metabolic intermediate biosynthesis; chorismate biosynthesis; chorismate from D-erythrose 4-phosphate and phosphoenolpyruvate: step 5/7. Its pathway is metabolic intermediate biosynthesis; chorismate biosynthesis; chorismate from D-erythrose 4-phosphate and phosphoenolpyruvate: step 6/7. Functionally, the AROM polypeptide catalyzes 5 consecutive enzymatic reactions in prechorismate polyaromatic amino acid biosynthesis. The protein is Pentafunctional AROM polypeptide of Saccharomyces cerevisiae (strain Lalvin EC1118 / Prise de mousse) (Baker's yeast).